A 975-amino-acid polypeptide reads, in one-letter code: Exportin-2 (975 aa).

The 77-residue stretch at 29 to 105 (AEKLLESTEL…KTLIVTLMLH (77 aa)) folds into the Importin N-terminal domain.

Belongs to the XPO2/CSE1 family. In terms of assembly, binds with high affinity to importin-alpha only in the presence of RanGTP.

Its subcellular location is the cytoplasm. The protein resides in the nucleus. Its function is as follows. Export receptor for importin alpha. Mediates importin-alpha re-export from the nucleus to the cytoplasm after import substrates have been released into the nucleoplasm. This is Exportin-2 from Drosophila melanogaster (Fruit fly).